Reading from the N-terminus, the 469-residue chain is Transcriptional coactivator YAP1 (469 aa).

The span at 1 to 21 shows a compositional bias: pro residues; sequence MEPAQQPPPQPAPQGPAPPSV. The tract at residues 1-47 is disordered; it reads MEPAQQPPPQPAPQGPAPPSVSPAGTPAAPPAPPAGHQVVHVRGDSE. Serine 46 is subject to Phosphoserine. A Phosphothreonine modification is found at threonine 48. A coiled-coil region spans residues 71 to 85; the sequence is MRLRKLPDSFFKPPE. Lysine 75 carries the post-translational modification N6-lactoyllysine. Positions 76-99 are disordered; it reads LPDSFFKPPEPKSHSRQASTDAGT. Phosphoserine is present on residues serine 90 and serine 94. Threonine 95 and threonine 104 each carry phosphothreonine. Serine 112 carries the phosphoserine; by LATS1 and LATS2 modification. A phosphoserine mark is found at serine 113 and serine 116. Threonine 136 is modified (phosphothreonine; by MAPK8 and MAPK9). Serine 146 is modified (phosphoserine; by LATS1 and LATS2). WW domains lie at 153 to 186 and 212 to 245; these read VPLP…DPRK and GPLP…DPRL. A disordered region spans residues 258 to 290; that stretch reads SAPVKQPPPLAPQSPQGGVLGGGSSNQQQQIQL. Residues serine 271 and serine 320 each carry the phosphoserine modification. The transactivation domain stretch occupies residues 273–469; that stretch reads QGGVLGGGSS…LDKESFLTWL (197 aa). A coiled-coil region spans residues 280–325; that stretch reads GSSNQQQQIQLQQLQMEKERLRLKQQELFRQELALRSQLPSLEQDG. Serine 333 carries the phosphoserine; by MAPK8 and MAPK9 modification. Over residues 345 to 357 the composition is skewed to polar residues; sequence TNSSDPFLNSGTY. The segment at 345–405 is disordered; it reads TNSSDPFLNS…SQSTLPSQQS (61 aa). Phosphoserine is present on residues serine 347, serine 348, and serine 354. Position 363 is a phosphoserine; by LATS1 and LATS2 (serine 363). Over residues 365 to 375 the composition is skewed to polar residues; that stretch reads DSGLSMSSYSI. Phosphoserine; by CK1 is present on residues serine 366 and serine 369. Position 373 is a phosphotyrosine; by ABL1 (tyrosine 373). The residue at position 378 (threonine 378) is a Phosphothreonine; by MAPK8 and MAPK9. Over residues 393–405 the composition is skewed to polar residues; that stretch reads DTISQSTLPSQQS.

The protein belongs to the YAP1 family. In terms of assembly, part of a complex when phosphorylated that contains DSG3, PKP1, YAP1 and YWHAG; the complex is required for localization of DSG3 and YAP1 to the cell membrane in keratinocytes. Binds to the SH3 domain of the YES kinase. Binds to WBP1 and WBP2. Binds, in vitro, through the WW1 domain, to neural isoforms of ENAH that contain the PPSY motif. The phosphorylated form interacts with YWHAB. Interacts (via WW domains) with LATS1 (via PPxY motif 2). Interacts with LATS2. Interacts (via WW domain 1) with ERBB4 (via PPxY motif 2). Interacts with TEAD1, TEAD2, TEAD3 and TEAD4. Interacts with TP73. Interacts with RUNX1. Interacts with HCK. Interacts (via WW domains) with PTPN14 (via PPxY motif 2); this interaction leads to the cytoplasmic sequestration of YAP1 and inhibits its transcriptional coactivator activity. Interacts (when phosphorylated at Ser-112) with SMAD2, SMAD3 and WWTR1. Interacts with PRRG2 (via cytoplasmic domain). Interacts (via WW domains) with PRRG4 (via cytoplasmic domain). Interacts (phosphorylated) with CLDN18; the interaction sequesters YAP1 away from the nucleus and thereby restricts transcription of YAP1 target genes. Interacts with SMAD1. Interacts with AMOT; the interaction facilitates translocation of YAP1 to the cytoplasm and tight junctions. Interacts with AMOTL2, the interaction is required for ubiquitination of AMOTL2 and localization of YAP1 to tight junctions. In terms of processing, phosphorylated by LATS1 and LATS2; leading to cytoplasmic translocation and inactivation. Phosphorylated by ABL1; leading to YAP1 stabilization, enhanced interaction with TP73 and recruitment onto proapoptotic genes; in response to DNA damage. Phosphorylation at Ser-366 and Ser-369 by CK1 is triggered by previous phosphorylation at Ser-363 by LATS proteins and leads to YAP1 ubiquitination by SCF(beta-TRCP) E3 ubiquitin ligase and subsequent degradation. Phosphorylated at Thr-104, Thr-136, Ser-333 and Thr-378 by MAPK8/JNK1 and MAPK9/JNK2, which is required for the regulation of apoptosis by YAP1. Lactylation by AARS1 promotes nuclear localization and stabilization of YAP1, leading to increased Hippo signaling pathway. Delactylated by SIRT1. Post-translationally, ubiquitinated by SCF(beta-TRCP) E3 ubiquitin ligase. In terms of tissue distribution, highly specific to cortical neurons.

The protein resides in the cytoplasm. It localises to the nucleus. Its subcellular location is the cell junction. The protein localises to the tight junction. It is found in the cell membrane. In terms of biological role, transcriptional regulator with dual roles as a coactivator and corepressor. Critical downstream regulatory target in the Hippo signaling pathway, crucial for organ size control and tumor suppression by restricting proliferation and promoting apoptosis. The Hippo signaling pathway core involves a kinase cascade featuring STK3/MST2 and STK4/MST1, along with its regulatory partner SAV1, which phosphorylates and activates LATS1/2 in complex with their regulatory protein, MOB1. This activation leads to the phosphorylation and inactivation of the YAP1 oncoprotein and WWTR1/TAZ. Phosphorylation of YAP1 by LATS1/2 prevents its nuclear translocation, thereby regulating the expression of its target genes. The transcriptional regulation of gene expression requires TEAD transcription factors and modulates cell growth, anchorage-independent growth, and induction of epithelial-mesenchymal transition (EMT). Plays a key role in tissue tension and 3D tissue shape by regulating the cortical actomyosin network, acting via ARHGAP18, a Rho GTPase activating protein that suppresses F-actin polymerization. It also suppresses ciliogenesis by acting as a transcriptional corepressor of TEAD4 target genes AURKA and PLK1. In conjunction with WWTR1, regulates TGFB1-dependent SMAD2 and SMAD3 nuclear accumulation. Synergizes with WBP2 to enhance PGR activity. Its function is as follows. Attenuates p73-mediated cell death signaling in transcriptional repression-induced atypical death (TRIAD) of neurons. This is Transcriptional coactivator YAP1 (Yap1) from Rattus norvegicus (Rat).